Here is a 1409-residue protein sequence, read N- to C-terminus: CRISPR-associated endonuclease Cas9 (1409 aa).

D31 functions as the For RuvC-like nuclease domain in the catalytic mechanism. Residues D31, E784, and E788 each contribute to the Mg(2+) site. Positions 792 to 949 (TNQGKSNSQQ…DKAGFIQRQL (158 aa)) constitute an HNH Cas9-type domain. H868 (proton acceptor for HNH nuclease domain) is an active-site residue. H1011 serves as a coordination point for Mg(2+). Over residues 1121–1130 (EQNHGLDRGK) the composition is skewed to basic and acidic residues. A disordered region spans residues 1121–1151 (EQNHGLDRGKPKGLFNANLSSKPKPNSNENL). Polar residues predominate over residues 1137–1150 (ANLSSKPKPNSNEN).

It belongs to the CRISPR-associated protein Cas9 family. Subtype II-A subfamily. As to quaternary structure, monomer. Binds crRNA and tracrRNA. The cofactor is Mg(2+).

Its activity is regulated as follows. Only has nuclease activity when bound to both gRNAs (crRNA plus tracrRNA). CRISPR (clustered regularly interspaced short palindromic repeat) is an adaptive immune system that provides protection against mobile genetic elements (viruses, transposable elements and conjugative plasmids). CRISPR clusters contain spacers, sequences complementary to antecedent mobile elements, and target invading nucleic acids. CRISPR clusters are transcribed and processed into CRISPR RNA (crRNA). In type II CRISPR systems correct processing of pre-crRNA requires a trans-encoded small RNA (tracrRNA), endogenous ribonuclease 3 (rnc) and Cas9. The tracrRNA serves as a guide for ribonuclease 3-aided processing of pre-crRNA. Cas9/crRNA/tracrRNA endonucleolytically cleaves linear or circular dsDNA target complementary to the spacer yielding blunt ends; Cas9 is inactive in the absence of the 2 guide RNAs (gRNA). Cas9 recognizes a 3'-G-rich protospacer adjacent motif (PAM, TGGTG in this organism) in the CRISPR repeat sequences to help distinguish self versus nonself, as targets within the bacterial CRISPR locus do not have PAMs. PAM recognition is also required for catalytic activity. When the CRISPR3/cas system consisting of cas9-cas1-cas2-csn2-CRISPR3 or just cas9-CRISPR3 is expressed in E.coli it prevents plasmids homologous to spacers 1 or 2 from transforming. The chain is CRISPR-associated endonuclease Cas9 from Streptococcus thermophilus.